Consider the following 156-residue polypeptide: MDINLTLIVQMLVFAAFVLFTMKLVWPPLAKALEERQDKIADGLAAAERGRKELELAQHRVKDELKQAKAHSADIIDKANKRASEIIEAAKEAAKREAQIQAKLAQEQIAQQVNHAKEELRKQVAKLAITGAEKILMREVDAKANSELLDNLIEEI.

A helical membrane pass occupies residues L5 to V25.

It belongs to the ATPase B chain family. As to quaternary structure, F-type ATPases have 2 components, F(1) - the catalytic core - and F(0) - the membrane proton channel. F(1) has five subunits: alpha(3), beta(3), gamma(1), delta(1), epsilon(1). F(0) has three main subunits: a(1), b(2) and c(10-14). The alpha and beta chains form an alternating ring which encloses part of the gamma chain. F(1) is attached to F(0) by a central stalk formed by the gamma and epsilon chains, while a peripheral stalk is formed by the delta and b chains.

It is found in the cell inner membrane. F(1)F(0) ATP synthase produces ATP from ADP in the presence of a proton or sodium gradient. F-type ATPases consist of two structural domains, F(1) containing the extramembraneous catalytic core and F(0) containing the membrane proton channel, linked together by a central stalk and a peripheral stalk. During catalysis, ATP synthesis in the catalytic domain of F(1) is coupled via a rotary mechanism of the central stalk subunits to proton translocation. In terms of biological role, component of the F(0) channel, it forms part of the peripheral stalk, linking F(1) to F(0). This chain is ATP synthase subunit b, found in Legionella pneumophila (strain Paris).